Here is a 550-residue protein sequence, read N- to C-terminus: Chaperonin GroEL (550 aa).

ATP contacts are provided by residues 29–32 (TAGP), Lys-50, 86–90 (DGTTT), Gly-416, and Asp-498.

It belongs to the chaperonin (HSP60) family. Forms a cylinder of 14 subunits composed of two heptameric rings stacked back-to-back. Interacts with the co-chaperonin GroES.

It is found in the cytoplasm. It carries out the reaction ATP + H2O + a folded polypeptide = ADP + phosphate + an unfolded polypeptide.. Its function is as follows. Together with its co-chaperonin GroES, plays an essential role in assisting protein folding. The GroEL-GroES system forms a nano-cage that allows encapsulation of the non-native substrate proteins and provides a physical environment optimized to promote and accelerate protein folding. The polypeptide is Chaperonin GroEL (Anaplasma phagocytophilum (strain HZ)).